The following is a 217-amino-acid chain: Secreted RxLR effector protein 147 (217 aa).

The first 23 residues, 1 to 23 (MRGAFYVTTALLITNSIRTAAEA), serve as a signal peptide directing secretion. Residues 22–52 (EANPPGRQPMSHHDGVVPGKSSPRRFLQGSH) are disordered. Positions 46–67 (RFLQGSHEPHDKFAVSAANEER) match the RxLR-dEER motif.

Belongs to the RxLR effector family.

Its subcellular location is the secreted. It localises to the host nucleus. It is found in the host cytoplasm. Secreted effector that completely suppresses the host cell death induced by cell death-inducing proteins. This is Secreted RxLR effector protein 147 from Plasmopara viticola (Downy mildew of grapevine).